A 577-amino-acid polypeptide reads, in one-letter code: MNIQSLINDKVSQALEAAGAPAGSPAAVRQSAKAQFGDYQANGVMGVAKRLGTNPREFAQKVLDVLDLDGIASKTEIAGPGFINIFLSEEFLAKQAEAALADKRLGVAKEEQQNIVADYSAPNVAKEMHVGHLRSTIIGDAVVRTLEFLGHNVTRANHIGDWGTQFGMLIANLERIQKEKGEVSMELSDLEGFYRESKKLYDEDEEFAVTARGYVVKLQSGDEFCAEMWKKLVDVTMVQNQRNYDRLNVSLTRDNVMGESMYNSMLAPIVADLQKQGLAVESEGAQVVFLDEYKNKDGEPMGVIVQKRDGGFLYTTTDIACAKYRYEELNADRVLYFIDSRQHQHLMQAWTIVRKAGYVPESVSLEHHAFGMMLGKDGRPFKTRAGGTVRLADLLDEAEERAAKLIEEKNKDLPAEEKAKIATTVAMAAVKYSDLSKHRTTDYIFDWDNMLAFEGNTAPYMQYAYTRVASIFSKAGLSMDELTGEVKITDEKEKALVAKLMQFEEAVQAVASEGQPHLMCAYLFELAGQFSSFYEACPILNNEDDAVKQSRLKLAALTAKTIKQGLELLGIETLERM.

A 'HIGH' region motif is present at residues 122-132 (PNVAKEMHVGH).

It belongs to the class-I aminoacyl-tRNA synthetase family. Monomer.

It is found in the cytoplasm. It catalyses the reaction tRNA(Arg) + L-arginine + ATP = L-arginyl-tRNA(Arg) + AMP + diphosphate. This chain is Arginine--tRNA ligase, found in Aliivibrio fischeri (strain MJ11) (Vibrio fischeri).